Consider the following 427-residue polypeptide: Nuclear distribution protein PAC1-2 (427 aa).

The region spanning 8–40 (QKDDLNKSIAEYLYAQDLTEIADSLCARLSLDY) is the LisH domain. Residues 58 to 82 (SVIRLQKKLIESENRYTALQEDIAA) adopt a coiled-coil conformation. WD repeat units lie at residues 106 to 147 (SHRA…RTLK), 149 to 187 (HTRE…NAGY), 194 to 233 (GHEH…CIRT), 236 to 275 (GHED…MKME), 278 to 336 (GHGH…ELRT), 339 to 378 (GHND…CMXV), and 381 to 420 (AHSH…SRIM).

It belongs to the WD repeat LIS1/nudF family. In terms of assembly, self-associates. Interacts with NDL1 and dynein.

The protein localises to the cytoplasm. The protein resides in the cytoskeleton. Its subcellular location is the spindle pole. Functionally, positively regulates the activity of the minus-end directed microtubule motor protein dynein. May enhance dynein-mediated microtubule sliding by targeting dynein to the microtubule plus end. Required for nuclear migration during vegetative growth as well as development. Required for retrograde early endosome (EE) transport from the hyphal tip. Required for localization of dynein to the mitotic spindle poles. Recruits additional proteins to the dynein complex at SPBs. The sequence is that of Nuclear distribution protein PAC1-2 from Postia placenta (strain ATCC 44394 / Madison 698-R) (Brown rot fungus).